The following is a 688-amino-acid chain: Ethylmalonyl-CoA mutase (688 aa).

The 130-residue stretch at 530–659 (TPRLVVGKPG…VGLAKVVERA (130 aa)) folds into the B12-binding domain. His543 provides a ligand contact to adenosylcob(III)alamin. A disordered region spans residues 666-688 (DRADTEAGVPGAPKRNESGAQVF).

It belongs to the methylmalonyl-CoA mutase family. Requires adenosylcob(III)alamin as cofactor.

The enzyme catalyses (2R)-ethylmalonyl-CoA = (2S)-methylsuccinyl-CoA. Its function is as follows. Radical enzyme that catalyzes the transformation of (2R)-ethylmalonyl-CoA to (2S)-methylsuccinyl-CoA. Is involved in the ethylmalonyl-CoA pathway for acetyl-CoA assimilation required for M.extorquens growth on one- and two-carbon compounds such as ethylamine, methanol or ethanol as sole carbon source. This enzyme acts as a regulatory metabolic control point in this pathway, that allows M.extorquens to efficiently restore metabolic balance when challenged with a sudden change in the growth substrate. The chain is Ethylmalonyl-CoA mutase from Methylorubrum extorquens (strain ATCC 14718 / DSM 1338 / JCM 2805 / NCIMB 9133 / AM1) (Methylobacterium extorquens).